Consider the following 438-residue polypeptide: MKLNSNINNNINNSSNSNNNFDAKNIIVDTITPPDPSVEFERKLAKSIFCLVHFIVYCVIIFRKGTILDQAFKDKDYFYLIWTHCVFFFAIGTYFLISSKRPGFVSLSNQNLNNNNNNNGSSNKFILEDSMGCIPQLNINPTPNYSKISNIKRKLKNSSGDITKNQENEDLVPLMEISKNIDEDSINDDTITTTTTTTTTTSTSTIPEISNDDDDNNNENNNDNVNNRNNNNSNGEKEDNDIDKLKNHYFCKKCLVDIPLRTKHCVKCNRCVLKYDHHCVFIGGCVGLNNHKNFLLFLLAESLLLLLGLRIIVTGFVRENSIKEWIFSNIAIIPPTLLIFGGLCMPFALFCFHSFLILTNQSSWEFNKYQRITYLKPFSKRGINPFNKGPWNNLKKFLKGDENPSDWILLSKYEVDQMKKKEENTFNIWNNKYYSCCG.

N-linked (GlcNAc...) asparagine glycans are attached at residues N12 and N13. 2 consecutive transmembrane segments (helical) span residues 48 to 68 (IFCL…GTIL) and 77 to 97 (YFYL…YFLI). Residues N119, N144, and N157 are each glycosylated (N-linked (GlcNAc...) asparagine). Residues 183–239 (EDSINDDTITTTTTTTTTTSTSTIPEISNDDDDNNNENNNDNVNNRNNNNSNGEKED) are disordered. Low complexity-rich tracts occupy residues 190 to 206 (TITT…TSTI) and 218 to 234 (NENN…NNSN). N231 is a glycosylation site (N-linked (GlcNAc...) asparagine). A DHHC domain is found at 249-299 (YFCKKCLVDIPLRTKHCVKCNRCVLKYDHHCVFIGGCVGLNNHKNFLLFLL). The next 2 membrane-spanning stretches (helical) occupy residues 294-314 (FLLF…IIVT) and 330-350 (IAII…FALF). N360 carries an N-linked (GlcNAc...) asparagine glycan.

The protein belongs to the DHHC palmitoyltransferase family.

It localises to the membrane. It catalyses the reaction L-cysteinyl-[protein] + hexadecanoyl-CoA = S-hexadecanoyl-L-cysteinyl-[protein] + CoA. This is Putative ZDHHC-type palmitoyltransferase 7 from Dictyostelium discoideum (Social amoeba).